The primary structure comprises 238 residues: Fatty acid metabolism regulator protein (238 aa).

The region spanning 6 to 74 (KGPASFAEKY…HGKPTRVNNF (69 aa)) is the HTH gntR-type domain. Positions 34–53 (ERELSELIGVTRTTLREVLQ) form a DNA-binding region, H-T-H motif.

Homodimer.

The protein resides in the cytoplasm. In terms of biological role, multifunctional regulator of fatty acid metabolism. The polypeptide is Fatty acid metabolism regulator protein (Shewanella baltica (strain OS155 / ATCC BAA-1091)).